We begin with the raw amino-acid sequence, 239 residues long: Proteasome activator complex subunit 2 (239 aa).

The residue at position 2 (A2) is an N-acetylalanine. S10 is modified (phosphoserine). The interval 65 to 86 (DIPIPDPPPKDDEMETDKQEKK) is disordered. A compositionally biased stretch (basic and acidic residues) spans 72–86 (PPKDDEMETDKQEKK).

The protein belongs to the PA28 family. As to quaternary structure, heterodimer of PSME1 and PSME2, which forms a hexameric ring.

Its function is as follows. Implicated in immunoproteasome assembly and required for efficient antigen processing. The PA28 activator complex enhances the generation of class I binding peptides by altering the cleavage pattern of the proteasome. The protein is Proteasome activator complex subunit 2 (PSME2) of Sus scrofa (Pig).